We begin with the raw amino-acid sequence, 140 residues long: Cysteine proteinase inhibitor 1 (140 aa).

The signal sequence occupies residues 1–26 (MRKYRVAGLVAALLVLHSLATPSAQA). The Cystatin domain occupies 48–135 (GGVEPVGNEN…KELQEFKPVD (88 aa)). Residues 91 to 95 (QVVAG) carry the Secondary area of contact motif.

Belongs to the cystatin family. Phytocystatin subfamily.

The protein resides in the secreted. Its function is as follows. There are two distinct cystatins in rice seeds (Oryzacystatin-1 and -2) with different specificities against cysteine proteinases. May be involved in the control of germination by inhibition of endogenous cysteine proteinases. May play a role in defense by inhibiting exogenous proteases such as those present in digestive tracks of insects and nematodes. The protein is Cysteine proteinase inhibitor 1 of Oryza sativa subsp. japonica (Rice).